A 583-amino-acid chain; its full sequence is Threonine--tRNA ligase (583 aa).

The tract at residues 185–478 (DHRKLGRELN…LVEHYGGAFP (294 aa)) is catalytic. Residues cysteine 278, histidine 329, and histidine 455 each coordinate Zn(2+).

Belongs to the class-II aminoacyl-tRNA synthetase family. In terms of assembly, homodimer. Zn(2+) serves as cofactor.

Its subcellular location is the cytoplasm. The catalysed reaction is tRNA(Thr) + L-threonine + ATP = L-threonyl-tRNA(Thr) + AMP + diphosphate + H(+). Functionally, catalyzes the attachment of threonine to tRNA(Thr) in a two-step reaction: L-threonine is first activated by ATP to form Thr-AMP and then transferred to the acceptor end of tRNA(Thr). Also edits incorrectly charged L-seryl-tRNA(Thr). This is Threonine--tRNA ligase from Borrelia recurrentis (strain A1).